Consider the following 377-residue polypeptide: Putative F-box only protein 10 (377 aa).

Residues 1 to 46 (MVSVNLPWELVEEILYRVPPQSLARFRTVCKQWNSLFDDNKFVNDH) enclose the F-box domain.

This is Putative F-box only protein 10 (FBX10) from Arabidopsis thaliana (Mouse-ear cress).